Here is a 365-residue protein sequence, read N- to C-terminus: sn-glycerol-3-phosphate import ATP-binding protein UgpC (365 aa).

An ABC transporter domain is found at 4-234 (LSLRNVQKHY…PASTFVAGFI (231 aa)). 36–43 (GPSGCGKS) serves as a coordination point for ATP.

Belongs to the ABC transporter superfamily. sn-glycerol-3-phosphate importer (TC 3.A.1.1.3) family. In terms of assembly, the complex is composed of two ATP-binding proteins (UgpC), two transmembrane proteins (UgpA and UgpE) and a solute-binding protein (UgpB).

It localises to the cell inner membrane. The catalysed reaction is sn-glycerol 3-phosphate(out) + ATP + H2O = sn-glycerol 3-phosphate(in) + ADP + phosphate + H(+). In terms of biological role, part of the ABC transporter complex UgpBAEC involved in sn-glycerol-3-phosphate (G3P) import. Responsible for energy coupling to the transport system. In Ralstonia nicotianae (strain ATCC BAA-1114 / GMI1000) (Ralstonia solanacearum), this protein is sn-glycerol-3-phosphate import ATP-binding protein UgpC.